Consider the following 117-residue polypeptide: uncharacterized protein (117 aa).

Transmembrane regions (helical) follow at residues 32–52, 56–76, and 87–107; these read VSSS…VTVV, VGVA…VTLL, and LSWC…SFFF.

It localises to the membrane. This is an uncharacterized protein from Saccharomyces cerevisiae (strain ATCC 204508 / S288c) (Baker's yeast).